Reading from the N-terminus, the 213-residue chain is Thiamine-phosphate synthase (213 aa).

4-amino-2-methyl-5-(diphosphooxymethyl)pyrimidine is bound by residues 41-45 and asparagine 73; that span reads QFRVK. Aspartate 74 and aspartate 93 together coordinate Mg(2+). Threonine 112 contributes to the 4-amino-2-methyl-5-(diphosphooxymethyl)pyrimidine binding site. 139–141 is a 2-[(2R,5Z)-2-carboxy-4-methylthiazol-5(2H)-ylidene]ethyl phosphate binding site; the sequence is SAT. Position 142 (lysine 142) interacts with 4-amino-2-methyl-5-(diphosphooxymethyl)pyrimidine. Glycine 171 is a 2-[(2R,5Z)-2-carboxy-4-methylthiazol-5(2H)-ylidene]ethyl phosphate binding site.

Belongs to the thiamine-phosphate synthase family. Requires Mg(2+) as cofactor.

It carries out the reaction 2-[(2R,5Z)-2-carboxy-4-methylthiazol-5(2H)-ylidene]ethyl phosphate + 4-amino-2-methyl-5-(diphosphooxymethyl)pyrimidine + 2 H(+) = thiamine phosphate + CO2 + diphosphate. The enzyme catalyses 2-(2-carboxy-4-methylthiazol-5-yl)ethyl phosphate + 4-amino-2-methyl-5-(diphosphooxymethyl)pyrimidine + 2 H(+) = thiamine phosphate + CO2 + diphosphate. It catalyses the reaction 4-methyl-5-(2-phosphooxyethyl)-thiazole + 4-amino-2-methyl-5-(diphosphooxymethyl)pyrimidine + H(+) = thiamine phosphate + diphosphate. The protein operates within cofactor biosynthesis; thiamine diphosphate biosynthesis; thiamine phosphate from 4-amino-2-methyl-5-diphosphomethylpyrimidine and 4-methyl-5-(2-phosphoethyl)-thiazole: step 1/1. In terms of biological role, condenses 4-methyl-5-(beta-hydroxyethyl)thiazole monophosphate (THZ-P) and 2-methyl-4-amino-5-hydroxymethyl pyrimidine pyrophosphate (HMP-PP) to form thiamine monophosphate (TMP). This is Thiamine-phosphate synthase from Erythrobacter litoralis (strain HTCC2594).